Here is a 221-residue protein sequence, read N- to C-terminus: HTH-type transcriptional regulator McbR (221 aa).

In terms of domain architecture, HTH gntR-type spans 10 to 77 (VSLTLQVEND…PAQAFTVPEV (68 aa)). Residues 37 to 56 (TKNLAEQLGMSITPVREALL) constitute a DNA-binding region (H-T-H motif).

Its function is as follows. Important for biofilm formation. Represses expression of McbA by binding to its promoter region, which prevents colanic acid overproduction and mucoidy. This Escherichia coli (strain K12) protein is HTH-type transcriptional regulator McbR (mcbR).